The chain runs to 638 residues: tRNA uridine 5-carboxymethylaminomethyl modification enzyme MnmG (638 aa).

Residues 15–20, Ile127, and Ser182 contribute to the FAD site; that span reads GAGHAG. 276 to 290 lines the NAD(+) pocket; it reads GPRYCPSIEDKIVRF. Gln373 contacts FAD.

It belongs to the MnmG family. Homodimer. Heterotetramer of two MnmE and two MnmG subunits. Requires FAD as cofactor.

It localises to the cytoplasm. In terms of biological role, NAD-binding protein involved in the addition of a carboxymethylaminomethyl (cmnm) group at the wobble position (U34) of certain tRNAs, forming tRNA-cmnm(5)s(2)U34. This Streptococcus suis (strain 98HAH33) protein is tRNA uridine 5-carboxymethylaminomethyl modification enzyme MnmG.